Here is a 200-residue protein sequence, read N- to C-terminus: Large ribosomal subunit protein uL4 (200 aa).

The interval 42–65 is disordered; sequence TRAQKTRSEVSGGGAKPWRQKGTG.

This sequence belongs to the universal ribosomal protein uL4 family. In terms of assembly, part of the 50S ribosomal subunit.

In terms of biological role, one of the primary rRNA binding proteins, this protein initially binds near the 5'-end of the 23S rRNA. It is important during the early stages of 50S assembly. It makes multiple contacts with different domains of the 23S rRNA in the assembled 50S subunit and ribosome. Its function is as follows. Forms part of the polypeptide exit tunnel. The protein is Large ribosomal subunit protein uL4 of Vibrio campbellii (strain ATCC BAA-1116).